A 220-amino-acid chain; its full sequence is GTP cyclohydrolase 1 (220 aa).

3 residues coordinate Zn(2+): Cys-109, His-112, and Cys-180.

The protein belongs to the GTP cyclohydrolase I family. Toroid-shaped homodecamer, composed of two pentamers of five dimers.

It carries out the reaction GTP + H2O = 7,8-dihydroneopterin 3'-triphosphate + formate + H(+). It functions in the pathway cofactor biosynthesis; 7,8-dihydroneopterin triphosphate biosynthesis; 7,8-dihydroneopterin triphosphate from GTP: step 1/1. The chain is GTP cyclohydrolase 1 from Yersinia enterocolitica serotype O:8 / biotype 1B (strain NCTC 13174 / 8081).